Here is a 242-residue protein sequence, read N- to C-terminus: Cytochrome c oxidase subunit 2 (242 aa).

The Mitochondrial intermembrane segment spans residues 1–30 (MSFYGSRYFGDIVHGELGKDLFRYHGFVMM). The helical transmembrane segment at 31 to 47 (VAVAVLVFVMYMGCVIL) threads the bilayer. Over 48–66 (FTKFSYRHFLNRQRLEFWW) the chain is Mitochondrial matrix. A helical membrane pass occupies residues 67 to 83 (TIVPMLMLVGLWXPSMI). Topologically, residues 84–242 (NLYYMEEVKR…YFVMWLEALN (159 aa)) are mitochondrial intermembrane. Positions 176, 211, 213, 215, 219, and 222 each coordinate Cu cation. E213 lines the Mg(2+) pocket.

This sequence belongs to the cytochrome c oxidase subunit 2 family. In terms of assembly, component of the cytochrome c oxidase (complex IV, CIV), a multisubunit enzyme composed of a catalytic core of 3 subunits and several supernumerary subunits. The complex exists as a monomer or a dimer and forms supercomplexes (SCs) in the inner mitochondrial membrane with ubiquinol-cytochrome c oxidoreductase (cytochrome b-c1 complex, complex III, CIII). Cu cation is required as a cofactor.

It is found in the mitochondrion inner membrane. The enzyme catalyses 4 Fe(II)-[cytochrome c] + O2 + 8 H(+)(in) = 4 Fe(III)-[cytochrome c] + 2 H2O + 4 H(+)(out). Functionally, component of the cytochrome c oxidase, the last enzyme in the mitochondrial electron transport chain which drives oxidative phosphorylation. The respiratory chain contains 3 multisubunit complexes succinate dehydrogenase (complex II, CII), ubiquinol-cytochrome c oxidoreductase (cytochrome b-c1 complex, complex III, CIII) and cytochrome c oxidase (complex IV, CIV), that cooperate to transfer electrons derived from NADH and succinate to molecular oxygen, creating an electrochemical gradient over the inner membrane that drives transmembrane transport and the ATP synthase. Cytochrome c oxidase is the component of the respiratory chain that catalyzes the reduction of oxygen to water. Electrons originating from reduced cytochrome c in the intermembrane space (IMS) are transferred via the dinuclear copper A center (CU(A)) of subunit 2 and heme A of subunit 1 to the active site in subunit 1, a binuclear center (BNC) formed by heme A3 and copper B (CU(B)). The BNC reduces molecular oxygen to 2 water molecules using 4 electrons from cytochrome c in the IMS and 4 protons from the mitochondrial matrix. This chain is Cytochrome c oxidase subunit 2 (COII), found in Mytilus edulis (Blue mussel).